A 342-amino-acid polypeptide reads, in one-letter code: 11-beta-hydroxysteroid dehydrogenase-like 6 (342 aa).

The helical; Signal-anchor for type II membrane protein transmembrane segment at 10 to 30 threads the bilayer; that stretch reads FLFPLLTLYALLVFYPTYQRL. NADP(+) contacts are provided by residues 54 to 80 and D105; that span reads GAASGIGEALAYEYGKRGAYLALVDIR. S184 serves as a coordination point for substrate. The active-site Proton acceptor is Y197. NADP(+)-binding positions include 197-201 and K201; that span reads YCASK.

It belongs to the short-chain dehydrogenases/reductases (SDR) family.

The protein resides in the membrane. The polypeptide is 11-beta-hydroxysteroid dehydrogenase-like 6 (HSD6) (Arabidopsis thaliana (Mouse-ear cress)).